Consider the following 284-residue polypeptide: Acetylglutamate kinase (284 aa).

Substrate contacts are provided by residues 64–65 (GG), arginine 86, and asparagine 179.

This sequence belongs to the acetylglutamate kinase family. ArgB subfamily.

It is found in the cytoplasm. The catalysed reaction is N-acetyl-L-glutamate + ATP = N-acetyl-L-glutamyl 5-phosphate + ADP. The protein operates within amino-acid biosynthesis; L-arginine biosynthesis; N(2)-acetyl-L-ornithine from L-glutamate: step 2/4. Catalyzes the ATP-dependent phosphorylation of N-acetyl-L-glutamate. The protein is Acetylglutamate kinase of Acaryochloris marina (strain MBIC 11017).